The chain runs to 151 residues: MKKIDVKILDPRVRKEFPLPTYATSGSAGLDLRACLDDAVELAPGDTTLVPTGLAIHIADPSLAAMMLPRSGLGHKHGIVLGNLVGLIDSDYQGQLMISVWNRGQDSFTIQPGERIAQMIFVPVVQAEFNLVEDFDATDRGEGGFGHSGRQ.

Residues 70 to 72 (RSG), N83, 87 to 89 (LID), and M97 contribute to the substrate site.

The protein belongs to the dUTPase family. The cofactor is Mg(2+).

It catalyses the reaction dUTP + H2O = dUMP + diphosphate + H(+). It functions in the pathway pyrimidine metabolism; dUMP biosynthesis; dUMP from dCTP (dUTP route): step 2/2. Its function is as follows. This enzyme is involved in nucleotide metabolism: it produces dUMP, the immediate precursor of thymidine nucleotides and it decreases the intracellular concentration of dUTP so that uracil cannot be incorporated into DNA. This chain is Deoxyuridine 5'-triphosphate nucleotidohydrolase, found in Shigella flexneri serotype 5b (strain 8401).